The chain runs to 907 residues: Sensor protein GacS (907 aa).

3 consecutive transmembrane segments (helical) span residues 9 to 25 (ASLM…WMQL), 84 to 101 (VLAH…IGSG), and 159 to 178 (LFAS…TLAV). The region spanning 182 to 234 (RTINGPMSQIKQAVSQLKDGNLETRLPPLGSRELDELASGINRMAATLQNAQE) is the HAMP domain. The 222-residue stretch at 281–502 (NMSHEIRTPL…EFWISLKLPK (222 aa)) folds into the Histidine kinase domain. H284 bears the Phosphohistidine; by autocatalysis mark. One can recognise a Response regulatory domain in the interval 658–777 (RVLCVDDNPA…QLAQVVLKWT (120 aa)). At D707 the chain carries 4-aspartylphosphate. The region spanning 814 to 907 (KADLAADMLA…RLEAEARVMA (94 aa)) is the HPt domain. Residue H853 is modified to Phosphohistidine.

Post-translationally, activation requires a sequential transfer of a phosphate group from a His in the primary transmitter domain, to an Asp in the receiver domain and to a His in the secondary transmitter domain.

The protein resides in the cell inner membrane. The catalysed reaction is ATP + protein L-histidine = ADP + protein N-phospho-L-histidine.. Functionally, forms part of a two-component regulatory system GacA/GacS(LemA). May be involved in lesion formation, swarming and in the production of extracellular protease, syringomycin and N-acyl-L-homoserine lactone (acyl-HSL). Required for pathogenicity on bean. This is Sensor protein GacS (gacS) from Pseudomonas syringae pv. syringae.